Here is a 248-residue protein sequence, read N- to C-terminus: Probable transcriptional regulatory protein PHZ_c3068 (248 aa).

This sequence belongs to the TACO1 family.

It localises to the cytoplasm. In Phenylobacterium zucineum (strain HLK1), this protein is Probable transcriptional regulatory protein PHZ_c3068.